We begin with the raw amino-acid sequence, 28 residues long: RRCFITPNVRSERCPPGQEVCFTKTXDG.

Cys3 and Cys21 are joined by a disulfide.

It belongs to the three-finger toxin family. Long-chain subfamily. Type II alpha-neurotoxin sub-subfamily. As to quaternary structure, heterotrimer composed of this alpha-neurotoxin-like peptide of 8 kDa, a neurotoxic phospholipase of 16 kDa (AC Q7LZG2) and a serine protease inhibitor of 7 kDa (AC B7S4N9) at an approximate stoichiometry of 1:1:4; non-covalently linked. In terms of tissue distribution, expressed by the venom gland.

It is found in the secreted. In terms of biological role, the heterotrimer blocks the voltage-dependent L-type calcium channels (Cav1/CACNA1) from the heart, and the small conductance calcium-activated potassium channels (KCa2/KCNN) in the chromaffin cells and in the brain. Is very toxic to mice. In Oxyuranus scutellatus scutellatus (Australian taipan), this protein is Taicatoxin, alpha-neurotoxin-like component.